We begin with the raw amino-acid sequence, 204 residues long: LexA repressor (204 aa).

Positions 29–49 (VREIGDAVGLMSSSTVHGHLQ) form a DNA-binding region, H-T-H motif. Active-site for autocatalytic cleavage activity residues include Ser127 and Lys164.

The protein belongs to the peptidase S24 family. In terms of assembly, homodimer.

It carries out the reaction Hydrolysis of Ala-|-Gly bond in repressor LexA.. In terms of biological role, represses a number of genes involved in the response to DNA damage (SOS response), including recA and lexA. In the presence of single-stranded DNA, RecA interacts with LexA causing an autocatalytic cleavage which disrupts the DNA-binding part of LexA, leading to derepression of the SOS regulon and eventually DNA repair. The sequence is that of LexA repressor from Desulfitobacterium hafniense (strain DSM 10664 / DCB-2).